Reading from the N-terminus, the 84-residue chain is Small ribosomal subunit protein uS17 (84 aa).

Belongs to the universal ribosomal protein uS17 family. As to quaternary structure, part of the 30S ribosomal subunit.

One of the primary rRNA binding proteins, it binds specifically to the 5'-end of 16S ribosomal RNA. The chain is Small ribosomal subunit protein uS17 from Vibrio parahaemolyticus serotype O3:K6 (strain RIMD 2210633).